A 361-amino-acid polypeptide reads, in one-letter code: Probable mannose-1-phosphate guanylyltransferase 1 (361 aa).

Leucine 6 and valine 7 together coordinate GDP-alpha-D-mannose. Residues glycine 9, glycine 11, threonine 12, arginine 13, and lysine 23 each contribute to the diphosphate site. GDP-alpha-D-mannose is bound by residues glycine 85, asparagine 109, aspartate 111, glycine 146, and asparagine 173.

This sequence belongs to the transferase hexapeptide repeat family.

The catalysed reaction is alpha-D-mannose 1-phosphate + GTP + H(+) = GDP-alpha-D-mannose + diphosphate. It functions in the pathway nucleotide-sugar biosynthesis; GDP-alpha-D-mannose biosynthesis; GDP-alpha-D-mannose from alpha-D-mannose 1-phosphate (GTP route): step 1/1. In terms of biological role, catalyzes a reaction of the Smirnoff-Wheeler pathway, the major route to ascorbate biosynthesis in plants. In Oryza sativa subsp. japonica (Rice), this protein is Probable mannose-1-phosphate guanylyltransferase 1.